The following is a 174-amino-acid chain: Ribosome maturation factor RimM (174 aa).

In terms of domain architecture, PRC barrel spans 96–170 (PDEFYDHELE…YVVIDPPEGL (75 aa)).

Belongs to the RimM family. As to quaternary structure, binds ribosomal protein uS19.

The protein localises to the cytoplasm. Functionally, an accessory protein needed during the final step in the assembly of 30S ribosomal subunit, possibly for assembly of the head region. Essential for efficient processing of 16S rRNA. May be needed both before and after RbfA during the maturation of 16S rRNA. It has affinity for free ribosomal 30S subunits but not for 70S ribosomes. This chain is Ribosome maturation factor RimM, found in Nocardia farcinica (strain IFM 10152).